The primary structure comprises 111 residues: Aspartate 1-decarboxylase (111 aa).

The Schiff-base intermediate with substrate; via pyruvic acid role is filled by Ser-25. Residue Ser-25 is modified to Pyruvic acid (Ser). A substrate-binding site is contributed by Thr-57. Tyr-58 functions as the Proton donor in the catalytic mechanism. Substrate is bound at residue Gly-73–Ala-75.

This sequence belongs to the PanD family. In terms of assembly, heterooctamer of four alpha and four beta subunits. It depends on pyruvate as a cofactor. In terms of processing, is synthesized initially as an inactive proenzyme, which is activated by self-cleavage at a specific serine bond to produce a beta-subunit with a hydroxyl group at its C-terminus and an alpha-subunit with a pyruvoyl group at its N-terminus.

The protein resides in the cytoplasm. It carries out the reaction L-aspartate + H(+) = beta-alanine + CO2. Its pathway is cofactor biosynthesis; (R)-pantothenate biosynthesis; beta-alanine from L-aspartate: step 1/1. Its function is as follows. Catalyzes the pyruvoyl-dependent decarboxylation of aspartate to produce beta-alanine. The polypeptide is Aspartate 1-decarboxylase (Francisella tularensis subsp. holarctica (strain LVS)).